The sequence spans 188 residues: dCTP deaminase (188 aa).

Residues 111 to 116 (KSTYAR), 135 to 137 (TLE), Gln156, Tyr170, Lys179, and Gln180 each bind dCTP. Glu137 serves as the catalytic Proton donor/acceptor.

Belongs to the dCTP deaminase family. Homotrimer.

It catalyses the reaction dCTP + H2O + H(+) = dUTP + NH4(+). It functions in the pathway pyrimidine metabolism; dUMP biosynthesis; dUMP from dCTP (dUTP route): step 1/2. In terms of biological role, catalyzes the deamination of dCTP to dUTP. This chain is dCTP deaminase, found in Rickettsia bellii (strain OSU 85-389).